The primary structure comprises 261 residues: Syntaxin-7 (261 aa).

Ser2 carries the post-translational modification N-acetylserine. Over 2–238 the chain is Cytoplasmic; that stretch reads SYTPGIGGDP…NYQRKSRKTL (237 aa). At Thr4 the chain carries Phosphothreonine. Residues 47 to 68 are a coiled coil; that stretch reads ELRQQLQQEQQYTNQLAKETDK. Residue Thr79 is modified to Phosphothreonine. Ser125, Ser126, Ser129, and Ser205 each carry phosphoserine. Residues 128-148 are disordered; that stretch reads VSGGFPEDSSKEKNFVSWESQ. One can recognise a t-SNARE coiled-coil homology domain in the interval 165 to 227; it reads LRLIHERESS…QQANQQLSRA (63 aa). Residues 239-259 form a helical; Anchor for type IV membrane protein membrane-spanning segment; sequence CIIILILVVGIVIIFFIVWGL. The Vesicular portion of the chain corresponds to 260-261; it reads KG.

This sequence belongs to the syntaxin family. In terms of assembly, interacts with VPS11, VPS16 and VPS18. Interacts with VPS33A. Forms a SNARE complex with VTI1B, STX8 and VAMP8 which functions in the homotypic fusion of late endosomes. Component of the SNARE complex composed of STX7, STX8, VAMP7 and VTI1B that is required for heterotypic fusion of late endosomes with lysosomes. Interacts with TPC1. In terms of tissue distribution, detected in all tissues tested. Highest expression is found in kidney followed by lung, spleen, heart and brain. Lower expression, in skeletal muscle, liver and testis.

The protein resides in the early endosome membrane. Functionally, may be involved in protein trafficking from the plasma membrane to the early endosome (EE) as well as in homotypic fusion of endocytic organelles. Mediates the endocytic trafficking from early endosomes to late endosomes and lysosomes. This is Syntaxin-7 (Stx7) from Rattus norvegicus (Rat).